The primary structure comprises 241 residues: MFDSFLNKLHQGIHQRGGQPAAVPEGLEHCHSSKSGGSIDSWLWSVPGFRRWRVTRLDAGESLQVLNSVAYPDHSLDHPLMGVDLLWFGARQKLVAVLDFQPLIQDQDYLDRHFQGLKALHERFPELNGEETMRSFDPNQYFSPWLLFCRGGAQEAEESLPAAFDAFLTAYWAMHDQALDVEAAGTSASTLSINDVERLQEAYDVYSAERDPAHGLFTSHFGKDWSDRFLHEFLFPASQST.

The disordered stretch occupies residues 16–35 (RGGQPAAVPEGLEHCHSSKS).

It belongs to the HY2 family.

It catalyses the reaction 15,16-dihydrobiliverdin + oxidized 2[4Fe-4S]-[ferredoxin] = biliverdin IXalpha + reduced 2[4Fe-4S]-[ferredoxin] + 2 H(+). Catalyzes the two-electron reduction of biliverdin IX-alpha at the C15 methine bridge. The polypeptide is 15,16-dihydrobiliverdin:ferredoxin oxidoreductase (Synechococcus sp. (strain WH7803)).